Consider the following 601-residue polypeptide: Proline--tRNA ligase (601 aa).

It belongs to the class-II aminoacyl-tRNA synthetase family. ProS type 1 subfamily. Homodimer.

The protein localises to the cytoplasm. It carries out the reaction tRNA(Pro) + L-proline + ATP = L-prolyl-tRNA(Pro) + AMP + diphosphate. Functionally, catalyzes the attachment of proline to tRNA(Pro) in a two-step reaction: proline is first activated by ATP to form Pro-AMP and then transferred to the acceptor end of tRNA(Pro). As ProRS can inadvertently accommodate and process non-cognate amino acids such as alanine and cysteine, to avoid such errors it has two additional distinct editing activities against alanine. One activity is designated as 'pretransfer' editing and involves the tRNA(Pro)-independent hydrolysis of activated Ala-AMP. The other activity is designated 'posttransfer' editing and involves deacylation of mischarged Ala-tRNA(Pro). The misacylated Cys-tRNA(Pro) is not edited by ProRS. The protein is Proline--tRNA ligase of Picosynechococcus sp. (strain ATCC 27264 / PCC 7002 / PR-6) (Agmenellum quadruplicatum).